Reading from the N-terminus, the 729-residue chain is MHNGSNGSVEQRDSMPETSREWWPGSLDVEILDQNAQDVGPWNGDFDYAEAFQELDYEALKEDIEEVMTTSKDWWPADYGHYGPLFIRMSWHAAGTYRTTDGRGGSSGGRQRLAPLNSWPDNANLDKARRLLWPVKQKYGRKISWADLLVLAGNVAMESMGFETFGFAGGREDDFKPDESIDWGPEDEMETWGRFNEEDELDNPLGATVMGLIYVNPEGPESTPDPEWSAQRIRKSFGRMAMNDRETAALIAGGHTFGKVHGADTDEHLQAEPEAAPIEQQGLGWHNEHGSGKGGDTITSGIEGPWTDAPTEWDMGYLDFLLDYEWEVHKGPGGAWQWRPKSDELKGVVPDAHDASETVDPMMLTTDVALKRDPDYREIIEDFRENPDAFEDAFARAWFKLLHRDMGPKERYLGPEVPEEDLIWQDPVPDADHDLIGDEEIAELKEAILETDLSVSRLVKTAWASASTYRDSDKRGGANGARIRLEPHRNWEANEPPQLAHALEVLTGIQKNFNDARTDDVRVSLADLIVLGGSAAIEKAAADAGHDVEVPFTPGRTDATQEQTDVEAFEYLEPKADGFRNYIADDPWQDWTPEEFLVDKADLLNLTPAETTVLVGGMRALDATHEQADGYGVFTDRPETLNNDYFVNLLDMGHEWDPVSEDKQHFKIRDRDTGEVKWKATRVDLIFGSNSRFRALSQVYGSGDAEEKFVDDFVDAWTKVMNLDRFDLE.

Positions 1–20 (MHNGSNGSVEQRDSMPETSR) are disordered. A compositionally biased stretch (basic and acidic residues) spans 10-20 (EQRDSMPETSR). The segment at residues 91–214 (WHAAGTYRTT…LGATVMGLIY (124 aa)) is a cross-link (tryptophyl-tyrosyl-methioninium (Trp-Tyr) (with M-240)). His-92 serves as the catalytic Proton acceptor. Positions 214–240 (YVNPEGPESTPDPEWSAQRIRKSFGRM) form a cross-link, tryptophyl-tyrosyl-methioninium (Tyr-Met) (with W-91). Position 255 (His-255) interacts with heme b.

This sequence belongs to the peroxidase family. Peroxidase/catalase subfamily. As to quaternary structure, homodimer or homotetramer. It depends on heme b as a cofactor. Post-translationally, formation of the three residue Trp-Tyr-Met cross-link is important for the catalase, but not the peroxidase activity of the enzyme.

The catalysed reaction is H2O2 + AH2 = A + 2 H2O. The enzyme catalyses 2 H2O2 = O2 + 2 H2O. Functionally, bifunctional enzyme with both catalase and broad-spectrum peroxidase activity. This chain is Catalase-peroxidase, found in Salinibacter ruber (strain DSM 13855 / M31).